Consider the following 1212-residue polypeptide: MTQNPVKFVHPFPFEVPFFNKGMDKFVMKHLIRRFVNQFGMTYTSHILDQLKILGFQQATDAAISLGIDDLLTTPSKAWLIQDAQQRGFASERHHDYGNVHAVEKLRQLIEVWHATSEYLRREMNPNFRMTDPLNPVHMMSFSGARGSTSQVHQLVGMRGLMSDPRGKIVDLPIQGNFREGLSLTEYIISCYGARKGVVDTSIRTADAGYLTRRLVEVVQHLVVRKVDCGTIQGLFVNLIQDRETIKNKFVLQTLIGRVLADDVYIHGRCIATRNEDIGIKLANQLYYFQVQPIYIRTPFTCKSIYWICQLCYGRNTTHSNLIELGEAVGIIAGQSIGEPGTQLTLRTFHTGGVFTGDIAEHVRAPFTGKIEFNENLVYPTRTRHGHPAYICYNSLDVTINNQYEVQNLTIPPESLLFIQNNQLVESEQVIAEVRAKRSPFKEKVKKHIYSDLTGEMHRSIPMSNLILETTHLWVLSGSIYESVVVPFSSDQDQVDIPELLLDKHKSLSNYSVDQVKHESVDSNCFEKGKKILNYFETDRTIPNEHKDSIYSAILFENTHMSVKKEKNKLIVPLWCDKQWGKRRIPCPDFIFRIPRGQGILLNKKHIFAFLNDPRSKMIKYGNILGGYSIEKKRNSLENQLDGGPRLKIKKTYASLISVGTNEIIINMIQISLLKYPFFNIAKRENIASSPFLFHNKLGHTNLNDQSKLLSKGTIRSLPNENKKDESFTILSPSDFLQIVLFHDLKCLNTVKKLDANKKRIELSGLLGHLHSIANRFPYSHFMTYKKVLLTERSISNNDSNNFQLAKCYFMDEKREIYQFDSCRNIIFDFFNLNLYFCLSNFFEKTFSVVSLGQFCSESIWISEDKQLQGSGQIVVVHEESFVIRLAKPYLGARGATLNSYYGKILSQGDTLITMLYERLKSDDIIQGLPKVEQLSEARSNTSISKNRKKRFQKLNRYLAIFFGNFWGSFTSVRMTMEDSQNQLVDEIQKVYRSQGVQISDKHIEIIVRQITSKVLVVDVDRSENKNWENGLGSLFLPGELVGLSRVQRMDRALEKRINYRTILLGMTNASLNTQSFLSEASFQETAQVLAKSALQGRIDWLKGLKENVILGGMIPVGTGFNRLVKRSKMNSRTSQKSLFINKVEDFFFEHQDQALILSLKQKETSKNKKETSKNKKETSKNKKETSKNKKETSKNKKETSKNKKEASKNKK.

Residues cysteine 229, cysteine 302, cysteine 309, and cysteine 312 each coordinate Zn(2+). Residues glutamine 1162–lysine 1212 are disordered.

The protein belongs to the RNA polymerase beta' chain family. RpoC2 subfamily. As to quaternary structure, in plastids the minimal PEP RNA polymerase catalytic core is composed of four subunits: alpha, beta, beta', and beta''. When a (nuclear-encoded) sigma factor is associated with the core the holoenzyme is formed, which can initiate transcription. Requires Zn(2+) as cofactor.

The protein localises to the plastid. It is found in the chloroplast. The enzyme catalyses RNA(n) + a ribonucleoside 5'-triphosphate = RNA(n+1) + diphosphate. Functionally, DNA-dependent RNA polymerase catalyzes the transcription of DNA into RNA using the four ribonucleoside triphosphates as substrates. This Cryptomeria japonica (Japanese cedar) protein is DNA-directed RNA polymerase subunit beta''.